The primary structure comprises 182 residues: Small ribosomal subunit protein uS4c (182 aa).

An S4 RNA-binding domain is found at 82-143 (MRLDNILFRL…KERSKVLIQN (62 aa)).

This sequence belongs to the universal ribosomal protein uS4 family. In terms of assembly, part of the 30S ribosomal subunit. Contacts protein S5. The interaction surface between S4 and S5 is involved in control of translational fidelity.

Its subcellular location is the plastid. The protein localises to the chloroplast. Its function is as follows. One of the primary rRNA binding proteins, it binds directly to 16S rRNA where it nucleates assembly of the body of the 30S subunit. Functionally, with S5 and S12 plays an important role in translational accuracy. This chain is Small ribosomal subunit protein uS4c (rps4), found in Neomarica sp. (strain Lejeune 1997).